A 395-amino-acid polypeptide reads, in one-letter code: Neuromedin-U receptor 2 (395 aa).

The Extracellular segment spans residues 1-41; that stretch reads MGKLENASWIHDPLMKYLNSTEEYLAHLCGPKRSDLSLPVS. Residues Asn6 and Asn19 are each glycosylated (N-linked (GlcNAc...) asparagine). A helical membrane pass occupies residues 42 to 62; that stretch reads VAYALIFLVGVMGNLLVCMVI. Residues 63–74 are Cytoplasmic-facing; that stretch reads VRHQTLKTPTNY. The chain crosses the membrane as a helical span at residues 75–95; it reads YLFSLAVSDLLVLLLGMPLEI. Over 96-115 the chain is Extracellular; that stretch reads YEMWHNYPFLFGPVGCYFKT. A disulfide bridge links Cys111 with Cys196. Residues 116–138 traverse the membrane as a helical segment; it reads ALFETVCFASILSVTTVSVERYV. At 139-157 the chain is on the cytoplasmic side; that stretch reads AIVHPFRAKLESTRRRALR. Residues 158–178 traverse the membrane as a helical segment; sequence ILSLVWSFSVVFSLPNTSIHG. Topologically, residues 179-212 are extracellular; the sequence is IKFQHFPNGSSVPGSATCTVTKPMWVYNLIIQAT. Asn186 carries an N-linked (GlcNAc...) asparagine glycan. A helical membrane pass occupies residues 213-233; the sequence is SFLFYILPMTLISVLYYLMGL. The Cytoplasmic segment spans residues 234–257; that stretch reads RLKRDESLEANKVAVNIHRPSRKS. The chain crosses the membrane as a helical span at residues 258-278; sequence VTKMLFVLVLVFAICWTPFHV. Residues 279–293 lie on the Extracellular side of the membrane; the sequence is DRLFFSFVEEWTESL. Residues 294–314 traverse the membrane as a helical segment; it reads AAVFNLIHVVSGVFFYLSSAV. At 315–395 the chain is on the cytoplasmic side; that stretch reads NPIIYNLLSR…TTAPCAGEVP (81 aa). The disordered stretch occupies residues 374-395; that stretch reads FPGQSSIHNTNLTTAPCAGEVP. Residues 375–387 show a composition bias toward polar residues; it reads PGQSSIHNTNLTT.

The protein belongs to the G-protein coupled receptor 1 family. The highest level is detected in the uterus. In the central nervous system, high expression levels were found in the hypothalamus and moderate levels in both the medulla oblongata and spinal cord. Expressed in the hypothalamic paraventricular nucleus (PVN) and suprachiasmatic nuclei (SCN) of the hypothalamus. Expression is low in the gastrointestinal tract. In other peripheral tissues, moderate expression was observed in the lung and ovary.

The protein localises to the cell membrane. Receptor for the neuromedin-U and neuromedin-S neuropeptides. The sequence is that of Neuromedin-U receptor 2 (Nmur2) from Rattus norvegicus (Rat).